A 950-amino-acid polypeptide reads, in one-letter code: Oxysterol-binding protein-related protein 1 (950 aa).

The segment at 1-237 (MNTEAEQQLL…NKVVHKALKR (237 aa)) is interaction with RAB7A. 3 ANK repeats span residues 47–76 (LGWT…KVNM), 80–109 (MGDT…DTTV), and 175–204 (LGNT…DPSL). One can recognise a PH domain in the interval 235-334 (LKRFEGPLWK…WLEAIEEHSA (100 aa)). Residues 430 to 463 (NFKLEQEQEKNKILSEALETLATEHHELERSLVE) are a coiled coil. The FFAT motif lies at 469–483 (SILSEDEFYDALSGS). Disordered regions lie at residues 795 to 821 (KKNT…VPDS) and 881 to 913 (MENG…SEED). Residues 877-913 (DIRAMENGEIDQASEEKKRLEEKQRAARKNRSKSEED) are a coiled coil. A compositionally biased stretch (basic and acidic residues) spans 890-901 (SEEKKRLEEKQR).

This sequence belongs to the OSBP family. As to quaternary structure, interacts (via FFAT motif) with VAPA. Interacts (via FFAT motif) with VAPB. Interacts with the GTP-bound form of RAB7A. Interacts with OAS1B. Interacts (via FFAT motif) with MOSPD2 (via MSP domain). Detected in prostate and liver.

It localises to the late endosome. Binds phospholipids; exhibits strong binding to phosphatidic acid and weak binding to phosphatidylinositol 3-phosphate. Stabilizes GTP-bound RAB7A on late endosomes/lysosomes and alters functional properties of late endocytic compartments via its interaction with RAB7A. Binds 25-hydroxycholesterol and cholesterol. In Rattus norvegicus (Rat), this protein is Oxysterol-binding protein-related protein 1.